A 147-amino-acid polypeptide reads, in one-letter code: Testis-expressed protein 29 (147 aa).

Over Met1–Ser57 the chain is Extracellular. The helical transmembrane segment at Tyr58–Ile78 threads the bilayer. The Cytoplasmic portion of the chain corresponds to Tyr79 to Asp147. Residues Arg86–Asp147 are disordered. A compositionally biased stretch (polar residues) spans Ala99–Gln108. Low complexity predominate over residues Pro109–Pro120. Residues Pro125 to Ala135 are compositionally biased toward basic and acidic residues.

The protein localises to the membrane. The sequence is that of Testis-expressed protein 29 (TEX29) from Bos taurus (Bovine).